The sequence spans 211 residues: 2,3-bisphosphoglycerate-dependent phosphoglycerate mutase (211 aa).

Substrate is bound by residues 9-16, 22-23, Arg61, 88-91, Lys99, 115-116, and 159-160; these read RHGQSDWN, TG, ERDY, RR, and GN. Residue His10 is the Tele-phosphohistidine intermediate of the active site. Glu88 functions as the Proton donor/acceptor in the catalytic mechanism.

The protein belongs to the phosphoglycerate mutase family. BPG-dependent PGAM subfamily. In terms of assembly, homodimer.

The enzyme catalyses (2R)-2-phosphoglycerate = (2R)-3-phosphoglycerate. The protein operates within carbohydrate degradation; glycolysis; pyruvate from D-glyceraldehyde 3-phosphate: step 3/5. Catalyzes the interconversion of 2-phosphoglycerate and 3-phosphoglycerate. The polypeptide is 2,3-bisphosphoglycerate-dependent phosphoglycerate mutase (Rhizobium etli (strain CIAT 652)).